Consider the following 206-residue polypeptide: Protein GrpE (206 aa).

The disordered stretch occupies residues 1 to 64 (MSKKASMHKE…KALEEAQQQA (64 aa)). The segment covering 46 to 58 (SDAKVQELEKALE) has biased composition (basic and acidic residues).

The protein belongs to the GrpE family. In terms of assembly, homodimer.

It is found in the cytoplasm. Its function is as follows. Participates actively in the response to hyperosmotic and heat shock by preventing the aggregation of stress-denatured proteins, in association with DnaK and GrpE. It is the nucleotide exchange factor for DnaK and may function as a thermosensor. Unfolded proteins bind initially to DnaJ; upon interaction with the DnaJ-bound protein, DnaK hydrolyzes its bound ATP, resulting in the formation of a stable complex. GrpE releases ADP from DnaK; ATP binding to DnaK triggers the release of the substrate protein, thus completing the reaction cycle. Several rounds of ATP-dependent interactions between DnaJ, DnaK and GrpE are required for fully efficient folding. The polypeptide is Protein GrpE (Prosthecochloris aestuarii (strain DSM 271 / SK 413)).